The primary structure comprises 229 residues: Ion-translocating oxidoreductase complex subunit E (229 aa).

Helical transmembrane passes span 58–78, 82–102, 105–125, 147–167, and 201–221; these read LGLG…ISLF, IPHD…VTTI, LMNA…PLIV, AFDG…LGAI, and GLLL…ILAV.

This sequence belongs to the NqrDE/RnfAE family. As to quaternary structure, the complex is composed of six subunits: RnfA, RnfB, RnfC, RnfD, RnfE and RnfG.

The protein localises to the cell inner membrane. Its function is as follows. Part of a membrane-bound complex that couples electron transfer with translocation of ions across the membrane. This chain is Ion-translocating oxidoreductase complex subunit E, found in Glaesserella parasuis serovar 5 (strain SH0165) (Haemophilus parasuis).